The following is a 451-amino-acid chain: C4-dicarboxylate transport protein (451 aa).

Helical transmembrane passes span 17 to 37 (SLYVQVLFAVVVGVLLGHFYP), 53 to 73 (LIKMIIAPIIFCTVVVGIAGM), 85 to 105 (LALLYFEIVSSVALVIGLIVV), 153 to 173 (AFAKGEILQVLLIAVMFGFAL), 193 to 213 (VLFTIVGYIMKVAPIGAFGAM), 231 to 251 (LMGSFYLTCLLFVFVVLGLIA), 306 to 326 (GYSFNLDGTSIYLTMAAVFIA), 339 to 359 (ITLLLVLLLTSKGAAGITGSG), and 361 to 381 (IVLAATLSAVGHVPVAGLALI).

The protein belongs to the dicarboxylate/amino acid:cation symporter (DAACS) (TC 2.A.23) family.

The protein resides in the cell inner membrane. Responsible for the transport of dicarboxylates such as succinate, fumarate, and malate from the periplasm across the membrane. The protein is C4-dicarboxylate transport protein of Paracidovorax citrulli (strain AAC00-1) (Acidovorax citrulli).